Consider the following 447-residue polypeptide: N-succinylarginine dihydrolase (447 aa).

Substrate-binding positions include 19–28 (AGLSFGNEAS), Asn110, and 137–138 (HR). Glu174 is a catalytic residue. Position 212 (Arg212) interacts with substrate. His248 is an active-site residue. Substrate-binding residues include Asp250 and Asn359. Residue Cys365 is the Nucleophile of the active site.

It belongs to the succinylarginine dihydrolase family. As to quaternary structure, homodimer.

The catalysed reaction is N(2)-succinyl-L-arginine + 2 H2O + 2 H(+) = N(2)-succinyl-L-ornithine + 2 NH4(+) + CO2. Its pathway is amino-acid degradation; L-arginine degradation via AST pathway; L-glutamate and succinate from L-arginine: step 2/5. Catalyzes the hydrolysis of N(2)-succinylarginine into N(2)-succinylornithine, ammonia and CO(2). In Salmonella schwarzengrund (strain CVM19633), this protein is N-succinylarginine dihydrolase.